The chain runs to 472 residues: Adenosylhomocysteinase (472 aa).

3 residues coordinate substrate: Thr62, Asp137, and Glu197. 198–200 provides a ligand contact to NAD(+); the sequence is TTT. Substrate is bound by residues Lys227 and Asp231. Residues Asn232, 261 to 266, Glu284, Asn319, 340 to 342, and Asn385 contribute to the NAD(+) site; these read GYGDVG and IGH.

The protein belongs to the adenosylhomocysteinase family. It depends on NAD(+) as a cofactor.

Its subcellular location is the cytoplasm. The catalysed reaction is S-adenosyl-L-homocysteine + H2O = L-homocysteine + adenosine. The protein operates within amino-acid biosynthesis; L-homocysteine biosynthesis; L-homocysteine from S-adenosyl-L-homocysteine: step 1/1. May play a key role in the regulation of the intracellular concentration of adenosylhomocysteine. In Bordetella petrii (strain ATCC BAA-461 / DSM 12804 / CCUG 43448), this protein is Adenosylhomocysteinase.